The sequence spans 452 residues: Pup--protein ligase (452 aa).

Glutamate 9 is a Mg(2+) binding site. Residue arginine 53 coordinates ATP. Tyrosine 55 contributes to the Mg(2+) binding site. Aspartate 57 (proton acceptor) is an active-site residue. Mg(2+) is bound at residue glutamate 63. The ATP site is built by threonine 66 and tryptophan 419.

This sequence belongs to the Pup ligase/Pup deamidase family. Pup-conjugating enzyme subfamily.

It catalyses the reaction ATP + [prokaryotic ubiquitin-like protein]-L-glutamate + [protein]-L-lysine = ADP + phosphate + N(6)-([prokaryotic ubiquitin-like protein]-gamma-L-glutamyl)-[protein]-L-lysine.. It participates in protein degradation; proteasomal Pup-dependent pathway. Its pathway is protein modification; protein pupylation. Catalyzes the covalent attachment of the prokaryotic ubiquitin-like protein modifier Pup to the proteasomal substrate proteins, thereby targeting them for proteasomal degradation. This tagging system is termed pupylation. The ligation reaction involves the side-chain carboxylate of the C-terminal glutamate of Pup and the side-chain amino group of a substrate lysine. The sequence is that of Pup--protein ligase from Nakamurella multipartita (strain ATCC 700099 / DSM 44233 / CIP 104796 / JCM 9543 / NBRC 105858 / Y-104) (Microsphaera multipartita).